The primary structure comprises 154 residues: 17 kDa surface antigen (154 aa).

Positions 1–19 are cleaved as a signal peptide; it reads MKLLSKIMIIALAASMLQA. The N-palmitoyl cysteine moiety is linked to residue C20. Residue C20 is the site of S-diacylglycerol cysteine attachment.

Belongs to the rickettsiale 17 kDa surface antigen family.

The protein resides in the cell outer membrane. This chain is 17 kDa surface antigen (omp), found in Rickettsia australis.